A 38-amino-acid chain; its full sequence is Kunitz-type trypsin inhibitor beta chain (38 aa).

This sequence belongs to the protease inhibitor I3 (leguminous Kunitz-type inhibitor) family. In terms of assembly, heterodimer of an alpha and a beta chain linked by a disulfide bond.

Its function is as follows. Inhibition of trypsin. This is Kunitz-type trypsin inhibitor beta chain from Neltuma juliflora (Mesquite).